The sequence spans 154 residues: 3-hydroxyacyl-[acyl-carrier-protein] dehydratase FabZ (154 aa).

The active site involves His60.

Belongs to the thioester dehydratase family. FabZ subfamily.

It localises to the cytoplasm. The enzyme catalyses a (3R)-hydroxyacyl-[ACP] = a (2E)-enoyl-[ACP] + H2O. Involved in unsaturated fatty acids biosynthesis. Catalyzes the dehydration of short chain beta-hydroxyacyl-ACPs and long chain saturated and unsaturated beta-hydroxyacyl-ACPs. This is 3-hydroxyacyl-[acyl-carrier-protein] dehydratase FabZ from Synechococcus sp. (strain CC9311).